We begin with the raw amino-acid sequence, 263 residues long: 3-methyl-2-oxobutanoate hydroxymethyltransferase (263 aa).

D45 and D84 together coordinate Mg(2+). 3-methyl-2-oxobutanoate contacts are provided by residues 45 to 46 (DS), D84, and K112. Residue E114 coordinates Mg(2+). The Proton acceptor role is filled by E180.

Belongs to the PanB family. In terms of assembly, homodecamer; pentamer of dimers. It depends on Mg(2+) as a cofactor.

It localises to the cytoplasm. It carries out the reaction 3-methyl-2-oxobutanoate + (6R)-5,10-methylene-5,6,7,8-tetrahydrofolate + H2O = 2-dehydropantoate + (6S)-5,6,7,8-tetrahydrofolate. Its pathway is cofactor biosynthesis; (R)-pantothenate biosynthesis; (R)-pantoate from 3-methyl-2-oxobutanoate: step 1/2. In terms of biological role, catalyzes the reversible reaction in which hydroxymethyl group from 5,10-methylenetetrahydrofolate is transferred onto alpha-ketoisovalerate to form ketopantoate. The sequence is that of 3-methyl-2-oxobutanoate hydroxymethyltransferase from Salmonella agona (strain SL483).